The primary structure comprises 213 residues: Outer envelope pore protein 24B, chloroplastic (213 aa).

Over 1 to 3 the chain is Cytoplasmic; it reads MAM. Residues 4 to 13 traverse the membrane as a beta stranded segment; sequence KASIKGKYDT. At 14-18 the chain is on the chloroplast intermembrane side; sequence DKTSG. The beta stranded transmembrane segment at 19-28 threads the bilayer; the sequence is IGSLAFNAGD. Over 29 to 32 the chain is Cytoplasmic; it reads IKLR. A beta stranded membrane pass occupies residues 33-42; that stretch reads ATMTDATLVA. The Chloroplast intermembrane portion of the chain corresponds to 43–55; sequence GPTLTGLALAVEK. Residues 56–64 form a beta stranded membrane-spanning segment; sequence PGSFIVEYN. Over 65–70 the chain is Cytoplasmic; it reads VPKKDV. A beta stranded membrane pass occupies residues 71–80; that stretch reads RFQFMNTVRI. At 81-93 the chain is on the chloroplast intermembrane side; it reads AEKPLNLTYIHSR. Residues 94 to 103 traverse the membrane as a beta stranded segment; that stretch reads ADNRTIVDGS. Over 104–108 the chain is Cytoplasmic; it reads LVIDS. A beta stranded transmembrane segment spans residues 109 to 118; it reads ANKLSANHMV. At 119-122 the chain is on the chloroplast intermembrane side; that stretch reads GTNN. A beta stranded membrane pass occupies residues 123 to 132; sequence CKIKYTYAHG. At 133-144 the chain is on the cytoplasmic side; that stretch reads GLATFEPCYDLA. A beta stranded transmembrane segment spans residues 145–156; it reads KNTWDFAVSRRF. Over 157-159 the chain is Chloroplast intermembrane; sequence YSG. Residues 160–168 form a beta stranded membrane-spanning segment; the sequence is DNVRATYQT. The Cytoplasmic segment spans residues 169–170; the sequence is SS. A beta stranded membrane pass occupies residues 171-179; it reads KLLGMEWSR. Residues 180 to 201 are Chloroplast intermembrane-facing; the sequence is NNKASGFKVCASVNLADELKTP. The beta stranded transmembrane segment at 202–211 threads the bilayer; sequence KLTAETTWNL. Residues 212 to 213 lie on the Cytoplasmic side of the membrane; it reads EM.

The protein belongs to the plastid outer envelope porin OEP24 (TC 1.B.28) family. In terms of assembly, homooligomers form large rather nonselective pores in plastidial outer membranes.

It is found in the plastid. Its subcellular location is the etioplast membrane. The protein localises to the chloroplast outer membrane. In terms of biological role, high-conductance voltage-dependent solute channel with a slight selectivity for cations transporting triosephosphates, dicarboxylic acids, ATP, inorganic phosphate (Pi), sugars, and positively or negatively charged amino acids. The sequence is that of Outer envelope pore protein 24B, chloroplastic (OEP24B) from Arabidopsis thaliana (Mouse-ear cress).